The following is a 334-amino-acid chain: Transcription initiation factor IIB (334 aa).

The TFIIB-type zinc-finger motif lies at 34-65 (TETVCPECGGRQLVHDYERAELVCQSCGLVID). Positions 38, 41, 57, and 60 each coordinate Zn(2+). 2 repeat units span residues 151–234 (SELD…SREL) and 245–326 (DYVP…ELAE).

This sequence belongs to the TFIIB family.

Functionally, stabilizes TBP binding to an archaeal box-A promoter. Also responsible for recruiting RNA polymerase II to the pre-initiation complex (DNA-TBP-TFIIB). The chain is Transcription initiation factor IIB from Methanoregula boonei (strain DSM 21154 / JCM 14090 / 6A8).